Reading from the N-terminus, the 369-residue chain is Peptide chain release factor 2 (369 aa).

N5-methylglutamine is present on Gln251.

It belongs to the prokaryotic/mitochondrial release factor family. In terms of processing, methylated by PrmC. Methylation increases the termination efficiency of RF2.

The protein resides in the cytoplasm. In terms of biological role, peptide chain release factor 2 directs the termination of translation in response to the peptide chain termination codons UGA and UAA. The polypeptide is Peptide chain release factor 2 (prfB) (Chlamydia pneumoniae (Chlamydophila pneumoniae)).